Here is a 330-residue protein sequence, read N- to C-terminus: MTLQHKLTQFPRLDLVGNATPLEKLSRLSDYLGREIYIKRDDVTPVALGGNKLRKLEFLAADALRQGADTLVTAGAIQSNHVRQTAAVAAKLGLHCVALLENPIGTEQANYLTNGNRLLLDLFNVDVVMCEALNDPNQQLAELATRVEAQGFRPYVVPIGGSNALGALGYVQCSLEIAAQAAGNVAFSSVVVASGSAGTHAGLAVGLQQLLPDAELIGVTVSRSADEQRPKVAQIQQALATSLGMTDPLAKITLWDSYFAPQYGMPNEEGIAAIKLLARLEGILLDPVYTGKAMAGLLDGIEQQKFCDKGPILFIHTGGAPALFAYHPQV.

At K52 the chain carries N6-(pyridoxal phosphate)lysine.

Belongs to the ACC deaminase/D-cysteine desulfhydrase family. In terms of assembly, homodimer. Pyridoxal 5'-phosphate serves as cofactor.

The enzyme catalyses D-cysteine + H2O = hydrogen sulfide + pyruvate + NH4(+) + H(+). Functionally, catalyzes the alpha,beta-elimination reaction of D-cysteine and of several D-cysteine derivatives. It could be a defense mechanism against D-cysteine. The sequence is that of D-cysteine desulfhydrase from Yersinia pseudotuberculosis serotype O:1b (strain IP 31758).